We begin with the raw amino-acid sequence, 400 residues long: Mu-type opioid receptor (400 aa).

Residues 1 to 68 (MDSSAAPTNA…CPPTGSPSMI (68 aa)) are Extracellular-facing. Asn-9, Asn-12, Asn-33, Asn-40, and Asn-48 each carry an N-linked (GlcNAc...) asparagine glycan. A helical transmembrane segment spans residues 69–93 (TAITIMALYSIVCVVGLFGNFLVMY). Over 94–106 (VIVRYTKMKTATN) the chain is Cytoplasmic. A helical transmembrane segment spans residues 107-131 (IYIFNLALADALATSTLPFQSVNYL). Residues 132 to 142 (MGTWPFGTILC) lie on the Extracellular side of the membrane. A disulfide bridge connects residues Cys-142 and Cys-219. A helical transmembrane segment spans residues 143–165 (KIVISIDYYNMFTSIFTLCTMSV). The Cytoplasmic segment spans residues 166–185 (DRYIAVCHPVKALDFRTPRN). Phosphotyrosine is present on Tyr-168. A helical transmembrane segment spans residues 186-207 (AKIINVCNWILSSAIGLPVMFM). The Extracellular portion of the chain corresponds to 208–230 (ATTKYRQGSIDCTLTFSHPTWYW). Residues 231-255 (ENLLKICVFIFAFIMPVLIITVCYG) form a helical membrane-spanning segment. Residues 256–279 (LMILRLKSVRMLSGSKEKDRNLRR) are Cytoplasmic-facing. A helical transmembrane segment spans residues 280–306 (ITRMVLVVVAVFIVCWTPIHIYVIIKA). Topologically, residues 307-314 (LVTIPETT) are extracellular. Residues 315 to 338 (FQTVSWHFCIALGYTNSCLNPVLY) traverse the membrane as a helical segment. Residues 334 to 338 (NPVLY) carry the NPxxY; plays a role in stabilizing the activated conformation of the receptor motif. Residues 339–400 (AFLDENFKRC…NLEAETAPLP (62 aa)) are Cytoplasmic-facing. A lipid anchor (S-palmitoyl cysteine) is attached at Cys-353. Position 365 is a phosphoserine (Ser-365). Thr-372 carries the post-translational modification Phosphothreonine. Phosphoserine is present on Ser-377. The residue at position 396 (Thr-396) is a Phosphothreonine.

The protein belongs to the G-protein coupled receptor 1 family. In terms of assembly, forms homooligomers and heterooligomers with other GPCRs, such as OPRD1, OPRK1, OPRL1, NPFFR2, ADRA2A, SSTR2, CNR1 and CCR5 (probably in dimeric forms). Interacts with heterotrimeric G proteins; interaction with a heterotrimeric complex containing GNAI1, GNB1 and GNG2 stabilizes the active conformation of the receptor and increases its affinity for endomorphin-2, the synthetic opioid peptide DAMGO and for morphinan agonists. Interacts with PPL; the interaction disrupts agonist-mediated G-protein activation. Interacts (via C-terminus) with DNAJB4 (via C-terminus). Interacts with calmodulin; the interaction inhibits the constitutive activity of OPRM1; it abolishes basal and attenuates agonist-stimulated G-protein coupling. Interacts with FLNA, PLD2, RANBP9 and WLS and GPM6A. Interacts with RTP4. Interacts with SYP and GNAS. Interacts with RGS9, RGS17, RGS20, RGS4, PPP1R9B and HINT1. Phosphorylated. Differentially phosphorylated in basal and agonist-induced conditions. Agonist-mediated phosphorylation modulates receptor internalization. Phosphorylated by GRK2 in a agonist-dependent manner. Phosphorylation at Tyr-168 requires receptor activation, is dependent on non-receptor protein tyrosine kinase Src and results in a decrease in agonist efficacy by reducing G-protein coupling efficiency. Phosphorylated on tyrosine residues; the phosphorylation is involved in agonist-induced G-protein-independent receptor down-regulation. Phosphorylation at Ser-377 is involved in G-protein-dependent but not beta-arrestin-dependent activation of the ERK pathway. Post-translationally, ubiquitinated. A basal ubiquitination seems not to be related to degradation. Ubiquitination is increased upon formation of OPRM1:OPRD1 oligomers leading to proteasomal degradation; the ubiquitination is diminished by RTP4. As to expression, expressed in brain. Isoform 16 and isoform 17 are detected in brain.

The protein resides in the cell membrane. Its subcellular location is the cell projection. The protein localises to the axon. It localises to the perikaryon. It is found in the dendrite. The protein resides in the endosome. Its subcellular location is the cytoplasm. Its function is as follows. Receptor for endogenous opioids such as beta-endorphin and endomorphin. Receptor for natural and synthetic opioids including morphine, heroin, DAMGO, fentanyl, etorphine, buprenorphin and methadone. Also activated by enkephalin peptides, such as Met-enkephalin or Met-enkephalin-Arg-Phe, with higher affinity for Met-enkephalin-Arg-Phe. Agonist binding to the receptor induces coupling to an inactive GDP-bound heterotrimeric G-protein complex and subsequent exchange of GDP for GTP in the G-protein alpha subunit leading to dissociation of the G-protein complex with the free GTP-bound G-protein alpha and the G-protein beta-gamma dimer activating downstream cellular effectors. The agonist- and cell type-specific activity is predominantly coupled to pertussis toxin-sensitive G(i) and G(o) G alpha proteins, GNAI1, GNAI2, GNAI3 and GNAO1 isoforms Alpha-1 and Alpha-2, and to a lesser extent to pertussis toxin-insensitive G alpha proteins GNAZ and GNA15. They mediate an array of downstream cellular responses, including inhibition of adenylate cyclase activity and both N-type and L-type calcium channels, activation of inward rectifying potassium channels, mitogen-activated protein kinase (MAPK), phospholipase C (PLC), phosphoinositide/protein kinase (PKC), phosphoinositide 3-kinase (PI3K) and regulation of NF-kappa-B. Also couples to adenylate cyclase stimulatory G alpha proteins. The selective temporal coupling to G-proteins and subsequent signaling can be regulated by RGSZ proteins, such as RGS9, RGS17 and RGS4. Phosphorylation by members of the GPRK subfamily of Ser/Thr protein kinases and association with beta-arrestins is involved in short-term receptor desensitization. Beta-arrestins associate with the GPRK-phosphorylated receptor and uncouple it from the G-protein thus terminating signal transduction. The phosphorylated receptor is internalized through endocytosis via clathrin-coated pits which involves beta-arrestins. The activation of the ERK pathway occurs either in a G-protein-dependent or a beta-arrestin-dependent manner and is regulated by agonist-specific receptor phosphorylation. Acts as a class A G-protein coupled receptor (GPCR) which dissociates from beta-arrestin at or near the plasma membrane and undergoes rapid recycling. Receptor down-regulation pathways are varying with the agonist and occur dependent or independent of G-protein coupling. Endogenous ligands induce rapid desensitization, endocytosis and recycling. Heterooligomerization with other GPCRs can modulate agonist binding, signaling and trafficking properties. Couples to GNAS and is proposed to be involved in excitatory effects. Functionally, does not bind agonists but may act through oligomerization with binding-competent OPRM1 isoforms and reduce their ligand binding activity. This is Mu-type opioid receptor (OPRM1) from Homo sapiens (Human).